We begin with the raw amino-acid sequence, 335 residues long: Agamous-like MADS-box protein AGL104 (335 aa).

In terms of domain architecture, MADS-box spans 1–61 (MGRVKLEIKR…DRLSLFSGKT (61 aa)). Residues 124–151 (SDVEELEHEVCRLQQQLQMAEEELRRYE) adopt a coiled-coil conformation. Residues 302–335 (MPAQQSDIPGVTAETQVDHEVSDYETKVPQLSSQ) are disordered. Basic and acidic residues predominate over residues 317 to 327 (QVDHEVSDYET).

As to quaternary structure, forms heterodimers with AGL30 and AGL65. In terms of tissue distribution, expressed in pollen.

The protein resides in the nucleus. Probable transcription factor that forms heterodimers with the MADS-box proteins AGL30 and AGL65 and is involved in the regulation of pollen maturation at the late stages of pollen development and pollen tube growth. The polypeptide is Agamous-like MADS-box protein AGL104 (Arabidopsis thaliana (Mouse-ear cress)).